Here is a 39-residue protein sequence, read N- to C-terminus: Photosystem II reaction center protein J (39 aa).

The helical transmembrane segment at 7 to 27 (IPLWIVATVAGTGVLVVVGLF) threads the bilayer.

This sequence belongs to the PsbJ family. In terms of assembly, PSII is composed of 1 copy each of membrane proteins PsbA, PsbB, PsbC, PsbD, PsbE, PsbF, PsbH, PsbI, PsbJ, PsbK, PsbL, PsbM, PsbT, PsbX, PsbY, PsbZ, Psb30/Ycf12, peripheral proteins PsbO, CyanoQ (PsbQ), PsbU, PsbV and a large number of cofactors. It forms dimeric complexes.

The protein resides in the cellular thylakoid membrane. Its function is as follows. One of the components of the core complex of photosystem II (PSII). PSII is a light-driven water:plastoquinone oxidoreductase that uses light energy to abstract electrons from H(2)O, generating O(2) and a proton gradient subsequently used for ATP formation. It consists of a core antenna complex that captures photons, and an electron transfer chain that converts photonic excitation into a charge separation. The sequence is that of Photosystem II reaction center protein J from Synechococcus elongatus (strain ATCC 33912 / PCC 7942 / FACHB-805) (Anacystis nidulans R2).